The following is a 287-amino-acid chain: mRNA-capping enzyme regulatory subunit OPG124 (287 aa).

It belongs to the orthopoxvirus mRNA-capping enzyme regulatory subunit family. In terms of assembly, interacts with the catalytic subunit OPG113.

The protein localises to the virion. Regulatory subunit of the mRNA cap enzyme which stabilizes the catalytic subunit and enhances its methyltransferase activity through an allosteric mechanism. Heterodimeric mRNA capping enzyme catalyzes the linkage of a N7-methyl-guanosine moiety to the first transcribed nucleotide (cap 0 structure), whereas the methyltransferase OPG102 is responsible for a second methylation at the 2'-O position of the ribose (cap 1 structure). Also involved in early viral gene transcription termination and intermediate viral gene transcription initiation. Early gene transcription termination requires the termination factor VTF, the DNA-dependent ATPase NPH-I/OPG123 and the RAP94/OPG109 subunit of the viral RNA polymerase, as well as the presence of a specific termination motif. Binds, together with RAP94/OPG109, to the termination motif 5'-UUUUUNU-3' in the nascent early mRNA. This Vaccinia virus (strain Copenhagen) (VACV) protein is mRNA-capping enzyme regulatory subunit OPG124 (OPG124).